Consider the following 491-residue polypeptide: AAA-ATPase At2g46620 (491 aa).

The chain crosses the membrane as a helical span at residues 1–21; sequence MGILWDSFLLLLVSTFALFLV. An ATP-binding site is contributed by 238–245; that stretch reads GPSGTGKS. Residues 423–460 form a disordered region; it reads GTGRRLLLENGSRKSTSEDVSDDMSGSLCGGGGGSSPA.

Belongs to the AAA ATPase family. BCS1 subfamily. Mg(2+) is required as a cofactor.

It localises to the membrane. The catalysed reaction is ATP + H2O = ADP + phosphate + H(+). This chain is AAA-ATPase At2g46620, found in Arabidopsis thaliana (Mouse-ear cress).